The sequence spans 161 residues: Small ribosomal subunit protein uS9 (161 aa).

The span at 1–21 (MATLQSLADLNRANTQTSNPE) shows a compositional bias: polar residues. The interval 1–25 (MATLQSLADLNRANTQTSNPENEAP) is disordered.

This sequence belongs to the universal ribosomal protein uS9 family.

The protein is Small ribosomal subunit protein uS9 of Methylorubrum populi (strain ATCC BAA-705 / NCIMB 13946 / BJ001) (Methylobacterium populi).